The primary structure comprises 232 residues: MAQTKREKAIKAAVVPGKAYAFEDAINILKSATKAKFVESIDVAVRLGVDAKKSDQQVRGSTVLPAGTGKSVRVAVFAPAGAKADEALAAGAEAVGMDDLAEKMQAGDLNYDVVIATPDAMRVVGKLGTVLGPRGLMPNPKVGTVSPNPGEAVKNAKSGQVRYRTDKAGIIHCTIGKADFAEDALKSNLTALLLDLIKAKPATSKGTYLQKVSVSSTMGPGVTVDQSSLTLK.

The protein belongs to the universal ribosomal protein uL1 family. As to quaternary structure, part of the 50S ribosomal subunit.

Functionally, binds directly to 23S rRNA. The L1 stalk is quite mobile in the ribosome, and is involved in E site tRNA release. Its function is as follows. Protein L1 is also a translational repressor protein, it controls the translation of the L11 operon by binding to its mRNA. This chain is Large ribosomal subunit protein uL1, found in Stenotrophomonas maltophilia (strain K279a).